Consider the following 467-residue polypeptide: Probable glutamate decarboxylase gamma (467 aa).

Lys278 is subject to N6-(pyridoxal phosphate)lysine.

Belongs to the group II decarboxylase family. Pyridoxal 5'-phosphate is required as a cofactor.

It catalyses the reaction L-glutamate + H(+) = 4-aminobutanoate + CO2. The polypeptide is Probable glutamate decarboxylase gamma (Listeria monocytogenes serovar 1/2a (strain ATCC BAA-679 / EGD-e)).